Consider the following 674-residue polypeptide: NADH-ubiquinone oxidoreductase chain 5 (674 aa).

Helical transmembrane passes span 27 to 47, 81 to 101, 113 to 133, 135 to 155, 173 to 193, 200 to 220, 242 to 262, 275 to 295, 301 to 323, 325 to 345, 363 to 383, 410 to 430, 453 to 473, 514 to 534, 556 to 576, 616 to 636, and 639 to 659; these read GAHI…IVAF, LTVS…IFSV, FFAY…GDNY, IMFV…NFWF, VGDM…GNLD, IAPF…LLAA, TPVS…YLLL, LIVI…TGLL, RVIA…LSQY, VALF…LAAG, LIGF…SLIA, VAYW…LRLI, TIVM…GYVA, AIGT…LPVF, YVDV…GYVI, ALYL…PVLL, and ALIN…IPYI.

The protein belongs to the complex I subunit 5 family.

The protein localises to the mitochondrion inner membrane. The enzyme catalyses a ubiquinone + NADH + 5 H(+)(in) = a ubiquinol + NAD(+) + 4 H(+)(out). Functionally, core subunit of the mitochondrial membrane respiratory chain NADH dehydrogenase (Complex I) that is believed to belong to the minimal assembly required for catalysis. Complex I functions in the transfer of electrons from NADH to the respiratory chain. The immediate electron acceptor for the enzyme is believed to be ubiquinone. This Mycosarcoma maydis (Corn smut fungus) protein is NADH-ubiquinone oxidoreductase chain 5 (ND5).